Reading from the N-terminus, the 498-residue chain is Glycerol kinase (498 aa).

Thr-12 lines the ADP pocket. Residues Thr-12, Thr-13, and Ser-14 each coordinate ATP. Thr-12 contributes to the sn-glycerol 3-phosphate binding site. Arg-16 is an ADP binding site. Sn-glycerol 3-phosphate-binding residues include Arg-82, Glu-83, Tyr-134, and Asp-243. Positions 82, 83, 134, 243, and 244 each coordinate glycerol. ADP-binding residues include Thr-265 and Gly-308. Thr-265, Gly-308, Gln-312, and Gly-412 together coordinate ATP. Gly-412 provides a ligand contact to ADP.

It belongs to the FGGY kinase family.

It catalyses the reaction glycerol + ATP = sn-glycerol 3-phosphate + ADP + H(+). Its pathway is polyol metabolism; glycerol degradation via glycerol kinase pathway; sn-glycerol 3-phosphate from glycerol: step 1/1. With respect to regulation, inhibited by fructose 1,6-bisphosphate (FBP). In terms of biological role, key enzyme in the regulation of glycerol uptake and metabolism. Catalyzes the phosphorylation of glycerol to yield sn-glycerol 3-phosphate. The polypeptide is Glycerol kinase (Rhizobium rhizogenes (strain K84 / ATCC BAA-868) (Agrobacterium radiobacter)).